Reading from the N-terminus, the 122-residue chain is Large ribosomal subunit protein uL18 (122 aa).

Basic residues predominate over residues M1–R19. The disordered stretch occupies residues M1–V21.

Belongs to the universal ribosomal protein uL18 family. In terms of assembly, part of the 50S ribosomal subunit; part of the 5S rRNA/L5/L18/L25 subcomplex. Contacts the 5S and 23S rRNAs.

In terms of biological role, this is one of the proteins that bind and probably mediate the attachment of the 5S RNA into the large ribosomal subunit, where it forms part of the central protuberance. The polypeptide is Large ribosomal subunit protein uL18 (Prochlorococcus marinus (strain MIT 9312)).